The primary structure comprises 1944 residues: Anaphase-promoting complex subunit 1 (1944 aa).

Phosphoserine occurs at positions 51, 60, 202, and 286. T291 is subject to Phosphothreonine. The interval 305 to 343 (LRSLSKGDSPVTSPFQNYSSIHSQSRSTSSPSLHSRSPS) is disordered. 7 positions are modified to phosphoserine: S313, S341, S343, S355, S362, S373, and S377. Positions 323 to 343 (SSIHSQSRSTSSPSLHSRSPS) are enriched in low complexity. The disordered stretch occupies residues 373–396 (SHNQSPKRHSISHSPNSNSNGSFL). The segment covering 384 to 394 (SHSPNSNSNGS) has biased composition (low complexity). T537 is subject to Phosphothreonine. 2 positions are modified to phosphoserine: S547 and S555. Residue Y571 is modified to Phosphotyrosine. 3 positions are modified to phosphoserine: S686, S688, and S916. The interval 994–1016 (KGKSVLSSDVPSGTETEEEDDGM) is disordered. The segment covering 998–1007 (VLSSDVPSGT) has biased composition (polar residues). 4 PC repeats span residues 1297-1325 (AAGL…PEQL), 1366-1404 (GATL…PEFL), 1467-1501 (GACL…YLSA), and 1520-1552 (LLSL…EMNY).

It belongs to the APC1 family. As to quaternary structure, the mammalian APC/C is composed at least of 14 distinct subunits ANAPC1, ANAPC2, CDC27/APC3, ANAPC4, ANAPC5, CDC16/APC6, ANAPC7, CDC23/APC8, ANAPC10, ANAPC11, CDC26/APC12, ANAPC13, ANAPC15 and ANAPC16 that assemble into a complex of at least 19 chains with a combined molecular mass of around 1.2 MDa; APC/C interacts with FZR1 and FBXO5. In terms of processing, phosphorylated. Phosphorylation on Ser-355 occurs specifically during mitosis.

Its pathway is protein modification; protein ubiquitination. Component of the anaphase promoting complex/cyclosome (APC/C), a cell cycle-regulated E3 ubiquitin ligase that controls progression through mitosis and the G1 phase of the cell cycle. The APC/C complex acts by mediating ubiquitination and subsequent degradation of target proteins: it mainly mediates the formation of 'Lys-11'-linked polyubiquitin chains and, to a lower extent, the formation of 'Lys-48'- and 'Lys-63'-linked polyubiquitin chains. The APC/C complex catalyzes assembly of branched 'Lys-11'-/'Lys-48'-linked branched ubiquitin chains on target proteins. This Homo sapiens (Human) protein is Anaphase-promoting complex subunit 1 (ANAPC1).